The chain runs to 601 residues: Lanthanide-dependent methanol dehydrogenase (601 aa).

The signal sequence occupies residues 1–21 (MRAVHLLALGAGLAAASPALA). Cys-124 and Cys-125 form a disulfide bridge. Positions 130, 174, 189, 190, and 191 each coordinate pyrroloquinoline quinone. Glu-192 provides a ligand contact to La(3+). Cys-197 and Cys-256 are oxidised to a cystine. Position 258 (Trp-258) interacts with pyrroloquinoline quinone. 3 residues coordinate La(3+): Asn-276, Asp-318, and Asp-320. Asp-318 functions as the Proton acceptor in the catalytic mechanism. Arg-345 contributes to the pyrroloquinoline quinone binding site. An intrachain disulfide couples Cys-408 to Cys-437. 2 residues coordinate pyrroloquinoline quinone: Trp-494 and Trp-558.

Belongs to the bacterial PQQ dehydrogenase family. As to quaternary structure, homodimer. La(3+) is required as a cofactor. It depends on Nd(3+) as a cofactor. Requires pyrroloquinoline quinone as cofactor.

The protein resides in the periplasm. It catalyses the reaction 2 Fe(III)-[cytochrome cL] + methanol = 2 Fe(II)-[cytochrome cL] + formaldehyde + 2 H(+). Catalyzes the oxidation of methanol to formaldehyde, but only in the presence of lanthanides (Ln). Contributes to methanol metabolism when La(3+) is present in the natural environment of the bacterium, allowing bacterial growth with methanol as carbon and energy source. Thereby is an essential enzyme for Ln-dependent methylotrophy. Uses a specific cytochrome cL (XoxG), encoded by the adjacent gene in the locus, as electron acceptor. Also plays a role in the transcriptional regulation of the mxa and xox1 operons, most likely acting as a lanthanide sensory module. Is also able to oxidize formaldehyde to formate in vitro, but this activity does not occur in vivo. This Methylorubrum extorquens (strain ATCC 14718 / DSM 1338 / JCM 2805 / NCIMB 9133 / AM1) (Methylobacterium extorquens) protein is Lanthanide-dependent methanol dehydrogenase.